We begin with the raw amino-acid sequence, 368 residues long: Flagellar P-ring protein (368 aa).

An N-terminal signal peptide occupies residues 1 to 22; the sequence is MLIPLARAVLALALLGAGAAHA.

The protein belongs to the FlgI family. As to quaternary structure, the basal body constitutes a major portion of the flagellar organelle and consists of four rings (L,P,S, and M) mounted on a central rod.

The protein localises to the periplasm. The protein resides in the bacterial flagellum basal body. Functionally, assembles around the rod to form the L-ring and probably protects the motor/basal body from shearing forces during rotation. The chain is Flagellar P-ring protein from Bordetella bronchiseptica (strain ATCC BAA-588 / NCTC 13252 / RB50) (Alcaligenes bronchisepticus).